Reading from the N-terminus, the 619-residue chain is Lysophospholipid acyltransferase (619 aa).

The Lumenal segment spans residues 1-19 (MYNPVDAVLTKIITNYGID). Residues 20 to 39 (SFTLRYAICLLGSFPLNAIL) form a helical membrane-spanning segment. Over 40 to 51 (KRIPEKRIGLKC) the chain is Cytoplasmic. A helical transmembrane segment spans residues 52–72 (CFIISMSMFYLFGVLNLVSGF). The Lumenal segment spans residues 73–92 (RTLFISTMFTYLISRFYRSK). A helical membrane pass occupies residues 93–113 (FMPHLNFMFVMGHLAINHIHA). Residues 114–231 (QFLNEQTQTT…GERRQIPKNG (118 aa)) lie on the Cytoplasmic side of the membrane. Aspartate 146 serves as the catalytic Nucleophile. Residues 232–252 (KLALWKVVQGLAWMILSTLGM) traverse the membrane as a helical segment. Over 253–274 (KHFPVKYVLDKDGFPTRSFIFR) the chain is Lumenal. The helical transmembrane segment at 275 to 295 (IHYLFLLGFIHRFKYYAAWTI) threads the bilayer. The Cytoplasmic portion of the chain corresponds to 296-429 (SEGSCILCGL…TPLPSKKIYD (134 aa)). The Nucleophile role is filled by glutamate 297. The active site involves histidine 382. A helical transmembrane segment spans residues 430 to 450 (LVGIYAIKLAFGYMVQPFIIL). Topologically, residues 451-456 (DLKPSL) are lumenal. The helical transmembrane segment at 457 to 477 (MVWGSVYFYVHIIVAFSFFLF) threads the bilayer. The Cytoplasmic portion of the chain corresponds to 478–619 (RGPYAKQVTE…SPKPISKKEE (142 aa)). Serine 513 is subject to Phosphoserine. Residues 545-593 (ELEKWDNAKEDWEDFCKDYKEWRNKNGLEIEEENLSKAFERFKQEFSNA) are a coiled coil. The disordered stretch occupies residues 592 to 619 (NAASGSGERVRKMSFSGYSPKPISKKEE). Phosphoserine occurs at positions 605, 610, and 615.

This sequence belongs to the membrane-bound acyltransferase family.

It is found in the endoplasmic reticulum membrane. The catalysed reaction is a 1-acyl-sn-glycero-3-phosphate + an acyl-CoA = a 1,2-diacyl-sn-glycero-3-phosphate + CoA. It carries out the reaction a 1-acyl-sn-glycero-3-phosphocholine + an acyl-CoA = a 1,2-diacyl-sn-glycero-3-phosphocholine + CoA. The enzyme catalyses 1-acyl-sn-glycero-3-phospho-(1'-sn-glycerol) + an acyl-CoA = a 1,2-diacyl-sn-glycero-3-phospho-(1'-sn-glycerol) + CoA. It catalyses the reaction a 1-acyl-sn-glycero-3-phospho-(1D-myo-inositol) + an acyl-CoA = a 1,2-diacyl-sn-glycero-3-phospho-(1D-myo-inositol) + CoA. The catalysed reaction is a 1-acyl-sn-glycero-3-phospho-L-serine + an acyl-CoA = a 1,2-diacyl-sn-glycero-3-phospho-L-serine + CoA. It carries out the reaction a 1-acyl-sn-glycero-3-phosphoethanolamine + an acyl-CoA = a 1,2-diacyl-sn-glycero-3-phosphoethanolamine + CoA. The enzyme catalyses 1-(9Z-octadecenoyl)-sn-glycero-3-phosphoethanolamine + (9Z)-octadecenoyl-CoA = 1,2-di-(9Z-octadecenoyl)-sn-glycero-3-phosphoethanolamine + CoA. It catalyses the reaction 1-(9Z-octadecenoyl)-sn-glycero-3-phosphoethanolamine + (9Z)-hexadecenoyl-CoA = 1-(9Z)-octadecenoyl-2-(9Z)-hexadecenoyl-sn-glycero-3-phosphoethanolamine + CoA. The catalysed reaction is 1-(9Z-octadecenoyl)-sn-glycero-3-phosphoethanolamine + hexadecanoyl-CoA = 1-(9Z-octadecenoyl)-2-hexadecanoyl-sn-glycero-3-phosphoethanolamine + CoA. It carries out the reaction 1-(9Z-octadecenoyl)-sn-glycero-3-phosphoethanolamine + tetradecanoyl-CoA = 1-(9Z)-octadecenoyl-2-tetradecanoyl-sn-glycero-3-phosphoethanolamine + CoA. The enzyme catalyses 1-(9Z-octadecenoyl)-sn-glycero-3-phosphate + (9Z)-octadecenoyl-CoA = 1,2-di-(9Z-octadecenoyl)-sn-glycero-3-phosphate + CoA. It catalyses the reaction (9Z)-hexadecenoyl-CoA + 1-hexadecanoyl-sn-glycero-3-phosphocholine = 1-hexadecanoyl-2-(9Z-hexadecenoyl)-sn-glycero-3-phosphocholine + CoA. The catalysed reaction is 1-hexadecanoyl-sn-glycero-3-phosphocholine + (9Z)-octadecenoyl-CoA = 1-hexadecanoyl-2-(9Z-octadecenoyl)-sn-glycero-3-phosphocholine + CoA. It carries out the reaction 1-tetradecanoyl-sn-glycero-3-phosphoethanolamine + (9Z)-octadecenoyl-CoA = 1-tetradecanoyl-2-(9Z-octadecenoyl)-sn-glycero-3-phosphoethanolamine + CoA. The enzyme catalyses 1-(9Z-octadecenoyl)-sn-glycero-3-phospho-L-serine + (9Z)-octadecenoyl-CoA = 1,2-di-(9Z)-octadecenoyl-sn-glycero-3-phospho-L-serine + CoA. It catalyses the reaction a 1-acyl-sn-glycero-3-phospho-(1D-myo-inositol) + (9Z)-octadecenoyl-CoA = a 1-acyl-2-(9Z-octadecenoyl)-sn-glycero-3-phospho-(1D-myo-inositol) + CoA. It functions in the pathway lipid metabolism; phospholipid metabolism. In terms of biological role, broad specificity membrane-bound O-acyltransferase that mediates the incorporation of unsaturated acyl chains into the sn-2 position of various lysophospholipids. Preferentially acylates lysophosphocholine (LPC), but also lysophosphoethanolamine (LPE), lysophosphatidylglycerol (LPG), lysophosphatidic acid (LPA), lysophosphoethanolamine (LPE), lysophosphoinositol (LPI), and lysophosphoserine (LPS). Prefers an acyl residue to an alkyl residue at the sn-1 position of lysophospholipid acceptors. Accepts acyl chains in acyl-CoA from C-2 to C-20, and shows strong preference for unsaturated acyl-CoAs with 16-20 carbons. Together with SLC1, plays a central role in phosphatidic acid (PA) biosynthesis. PA is the intermediate, from which all glycerophospholipids are synthesized. Can also introduce an acyl chain at the sn-1 position of the lysophosphatidylcholine analog 1-hydroxy-2-hexadecyl-sn-glycero-3-phosphocholine (HHPC). The chain is Lysophospholipid acyltransferase from Saccharomyces cerevisiae (strain ATCC 204508 / S288c) (Baker's yeast).